A 531-amino-acid polypeptide reads, in one-letter code: Chaperonin GroEL, chloroplastic (531 aa).

ATP-binding positions include 30 to 33 (TLGP), 87 to 91 (DGTTT), Gly-415, 481 to 483 (NAA), and Asp-497.

It belongs to the chaperonin (HSP60) family. As to quaternary structure, forms a cylinder of 14 subunits composed of two heptameric rings stacked back-to-back. Interacts with the co-chaperonin GroES.

The protein resides in the plastid. It is found in the chloroplast. The enzyme catalyses ATP + H2O + a folded polypeptide = ADP + phosphate + an unfolded polypeptide.. Together with its co-chaperonin GroES, plays an essential role in assisting protein folding. The GroEL-GroES system forms a nano-cage that allows encapsulation of the non-native substrate proteins and provides a physical environment optimized to promote and accelerate protein folding. The chain is Chaperonin GroEL, chloroplastic from Emiliania huxleyi (Coccolithophore).